A 441-amino-acid chain; its full sequence is MSKVTPQPKIGFVSLGCPKNLVDSERILTELRTEGYDVVPSYDDADMVIVNTCGFIDSAVQESLEAIGEALNENGKVIVTGCLGAKEDQIREVHPKVLEITGPHSYEQVLEHVHHYVPKPKHNPFLSLVPEQGVKLTPRHYAYLKISEGCNHRCTFCIIPSMRGDLVSRPIGEVLSEAKRLVDAGVKEILVISQDTSAYGVDVKHRTGFHNGKPVKTSMVSLCEQLSKLGIWTRLHYVYPYPHVDDVIPLMAEGKILPYLDIPLQHASPRILKLMKRPGSVDRQLARIKQWREICPELTLRSTFIVGFPGETEEDFQMLLDFLKEARLDRVGCFKYSPVEGADANALPDQVPEEVKEERWNRFMQLQQQISAERLQEKVGREILVIIDEVDEEGAIGRSMADAPEIDGAVYLNGETNVKPGDILRVKVEHADEYDLWGSRV.

The 111-residue stretch at 8–118 (PKIGFVSLGC…VLEHVHHYVP (111 aa)) folds into the MTTase N-terminal domain. Residues C17, C53, C82, C150, C154, and C157 each coordinate [4Fe-4S] cluster. Residues 136 to 373 (LTPRHYAYLK…MQLQQQISAE (238 aa)) enclose the Radical SAM core domain. A TRAM domain is found at 376–441 (QEKVGREILV…DEYDLWGSRV (66 aa)).

Belongs to the methylthiotransferase family. RimO subfamily. Requires [4Fe-4S] cluster as cofactor.

Its subcellular location is the cytoplasm. It carries out the reaction L-aspartate(89)-[ribosomal protein uS12]-hydrogen + (sulfur carrier)-SH + AH2 + 2 S-adenosyl-L-methionine = 3-methylsulfanyl-L-aspartate(89)-[ribosomal protein uS12]-hydrogen + (sulfur carrier)-H + 5'-deoxyadenosine + L-methionine + A + S-adenosyl-L-homocysteine + 2 H(+). Functionally, catalyzes the methylthiolation of an aspartic acid residue of ribosomal protein uS12. The sequence is that of Ribosomal protein uS12 methylthiotransferase RimO from Shigella boydii serotype 18 (strain CDC 3083-94 / BS512).